Here is a 210-residue protein sequence, read N- to C-terminus: Large ribosomal subunit protein uL3 (210 aa).

The protein belongs to the universal ribosomal protein uL3 family. Part of the 50S ribosomal subunit. Forms a cluster with proteins L14 and L19.

Functionally, one of the primary rRNA binding proteins, it binds directly near the 3'-end of the 23S rRNA, where it nucleates assembly of the 50S subunit. In Pseudothermotoga lettingae (strain ATCC BAA-301 / DSM 14385 / NBRC 107922 / TMO) (Thermotoga lettingae), this protein is Large ribosomal subunit protein uL3.